Here is a 344-residue protein sequence, read N- to C-terminus: 3-isopropylmalate dehydrogenase (344 aa).

74–87 provides a ligand contact to NAD(+); sequence GPKWDALPRKIRPE. The substrate site is built by R94, R104, R132, and D217. Residues D217, D241, and D245 each contribute to the Mg(2+) site. 274-286 is an NAD(+) binding site; that stretch reads GSAPDIAGKGIAN.

This sequence belongs to the isocitrate and isopropylmalate dehydrogenases family. LeuB type 1 subfamily. As to quaternary structure, homodimer. Mg(2+) is required as a cofactor. The cofactor is Mn(2+).

The protein localises to the cytoplasm. It catalyses the reaction (2R,3S)-3-isopropylmalate + NAD(+) = 4-methyl-2-oxopentanoate + CO2 + NADH. Its pathway is amino-acid biosynthesis; L-leucine biosynthesis; L-leucine from 3-methyl-2-oxobutanoate: step 3/4. In terms of biological role, catalyzes the oxidation of 3-carboxy-2-hydroxy-4-methylpentanoate (3-isopropylmalate) to 3-carboxy-4-methyl-2-oxopentanoate. The product decarboxylates to 4-methyl-2 oxopentanoate. The sequence is that of 3-isopropylmalate dehydrogenase (leuB) from Thermus aquaticus.